We begin with the raw amino-acid sequence, 150 residues long: Large ribosomal subunit protein bL9 (150 aa).

Belongs to the bacterial ribosomal protein bL9 family.

In terms of biological role, binds to the 23S rRNA. The protein is Large ribosomal subunit protein bL9 of Acidovorax ebreus (strain TPSY) (Diaphorobacter sp. (strain TPSY)).